Consider the following 159-residue polypeptide: SsrA-binding protein (159 aa).

The protein belongs to the SmpB family.

It localises to the cytoplasm. In terms of biological role, required for rescue of stalled ribosomes mediated by trans-translation. Binds to transfer-messenger RNA (tmRNA), required for stable association of tmRNA with ribosomes. tmRNA and SmpB together mimic tRNA shape, replacing the anticodon stem-loop with SmpB. tmRNA is encoded by the ssrA gene; the 2 termini fold to resemble tRNA(Ala) and it encodes a 'tag peptide', a short internal open reading frame. During trans-translation Ala-aminoacylated tmRNA acts like a tRNA, entering the A-site of stalled ribosomes, displacing the stalled mRNA. The ribosome then switches to translate the ORF on the tmRNA; the nascent peptide is terminated with the 'tag peptide' encoded by the tmRNA and targeted for degradation. The ribosome is freed to recommence translation, which seems to be the essential function of trans-translation. The sequence is that of SsrA-binding protein from Acidiphilium cryptum (strain JF-5).